The sequence spans 111 residues: uncharacterized protein (111 aa).

Transmembrane regions (helical) follow at residues L18 to S38 and L42 to P62.

Its subcellular location is the membrane. This is an uncharacterized protein from Saccharomyces cerevisiae (strain ATCC 204508 / S288c) (Baker's yeast).